We begin with the raw amino-acid sequence, 260 residues long: Trans-aconitate 2-methyltransferase (260 aa).

It belongs to the methyltransferase superfamily. Tam family.

The protein localises to the cytoplasm. The catalysed reaction is trans-aconitate + S-adenosyl-L-methionine = (E)-3-(methoxycarbonyl)pent-2-enedioate + S-adenosyl-L-homocysteine. Functionally, catalyzes the S-adenosylmethionine monomethyl esterification of trans-aconitate. This chain is Trans-aconitate 2-methyltransferase, found in Methylobacterium radiotolerans (strain ATCC 27329 / DSM 1819 / JCM 2831 / NBRC 15690 / NCIMB 10815 / 0-1).